Reading from the N-terminus, the 185-residue chain is Urease accessory protein UreE (185 aa).

The interval 153–185 (LRANSAQGHGHSHSHSHDHHGYHHHGDGHWHKH) is disordered. Over residues 162-175 (GHSHSHSHDHHGYH) the composition is skewed to basic residues. Basic and acidic residues predominate over residues 176 to 185 (HHGDGHWHKH).

This sequence belongs to the UreE family.

The protein localises to the cytoplasm. Functionally, involved in urease metallocenter assembly. Binds nickel. Probably functions as a nickel donor during metallocenter assembly. This chain is Urease accessory protein UreE, found in Haemophilus influenzae (strain 86-028NP).